The following is a 748-amino-acid chain: Putative transmembrane protein ORF88 (748 aa).

The signal sequence occupies residues 1 to 20 (MIIMKSIILLLAWFLTKTQA). At 21–723 (NMLTESLYLS…LNLAPFKTLS (703 aa)) the chain is on the extracellular side. N55, N78, N99, N152, N189, N390, N467, and N499 each carry an N-linked (GlcNAc...) asparagine; by host glycan. The disordered stretch occupies residues 531–574 (LTFDSPPPPPTTTQAPPPPPTTTQAPPPPPTTTQAPPPPIVINT). Residues 535–570 (SPPPPPTTTQAPPPPPTTTQAPPPPPTTTQAPPPPI) are compositionally biased toward pro residues. N573, N584, N599, N612, and N617 each carry an N-linked (GlcNAc...) asparagine; by host glycan. The disordered stretch occupies residues 650–680 (PSIGRAPIPPPDVPVEPPRSIPTTNAPSPEE). Positions 656–669 (PIPPPDVPVEPPRS) are enriched in pro residues. A helical membrane pass occupies residues 724–744 (YAGIGVVSFALLFTILVVCLI). The Cytoplasmic segment spans residues 745–748 (KFSI).

It localises to the host membrane. The sequence is that of Putative transmembrane protein ORF88 from Magallana gigas (Pacific oyster).